A 334-amino-acid polypeptide reads, in one-letter code: Fructose-1,6-bisphosphatase class 1 (334 aa).

Mg(2+) contacts are provided by glutamate 89, aspartate 112, leucine 114, and aspartate 115. Substrate is bound by residues 115–118, asparagine 208, tyrosine 241, and lysine 271; that span reads DGSS. Glutamate 277 lines the Mg(2+) pocket.

It belongs to the FBPase class 1 family. As to quaternary structure, homotetramer. It depends on Mg(2+) as a cofactor.

It is found in the cytoplasm. The catalysed reaction is beta-D-fructose 1,6-bisphosphate + H2O = beta-D-fructose 6-phosphate + phosphate. Its pathway is carbohydrate biosynthesis; gluconeogenesis. The chain is Fructose-1,6-bisphosphatase class 1 from Photorhabdus laumondii subsp. laumondii (strain DSM 15139 / CIP 105565 / TT01) (Photorhabdus luminescens subsp. laumondii).